The chain runs to 162 residues: Lipoprotein signal peptidase (162 aa).

The next 2 membrane-spanning stretches (helical) occupy residues 56-76 (FLPP…VVWY) and 84-104 (SPLF…NLID). Active-site residues include D113 and D139. The chain crosses the membrane as a helical span at residues 132-152 (WPIFNVADSCITIGACMIVLF).

It belongs to the peptidase A8 family.

Its subcellular location is the cell inner membrane. It catalyses the reaction Release of signal peptides from bacterial membrane prolipoproteins. Hydrolyzes -Xaa-Yaa-Zaa-|-(S,diacylglyceryl)Cys-, in which Xaa is hydrophobic (preferably Leu), and Yaa (Ala or Ser) and Zaa (Gly or Ala) have small, neutral side chains.. The protein operates within protein modification; lipoprotein biosynthesis (signal peptide cleavage). This protein specifically catalyzes the removal of signal peptides from prolipoproteins. This Chlorobaculum tepidum (strain ATCC 49652 / DSM 12025 / NBRC 103806 / TLS) (Chlorobium tepidum) protein is Lipoprotein signal peptidase.